A 284-amino-acid chain; its full sequence is RNase adapter protein RapZ (284 aa).

8–15 (GRSGSGKS) contacts ATP. Position 56 to 59 (56 to 59 (DVRN)) interacts with GTP. The RNA-binding stretch occupies residues 266–284 (RSRGKNVQSRHRTLEKRKS).

It belongs to the RapZ-like family. RapZ subfamily. In terms of assembly, homotrimer.

Its function is as follows. Modulates the synthesis of GlmS, by affecting the processing and stability of the regulatory small RNA GlmZ. When glucosamine-6-phosphate (GlcN6P) concentrations are high in the cell, RapZ binds GlmZ and targets it to cleavage by RNase E. Consequently, GlmZ is inactivated and unable to activate GlmS synthesis. Under low GlcN6P concentrations, RapZ is sequestered and inactivated by an other regulatory small RNA, GlmY, preventing GlmZ degradation and leading to synthesis of GlmS. This Klebsiella pneumoniae (strain 342) protein is RNase adapter protein RapZ.